Reading from the N-terminus, the 62-residue chain is Photosystem II reaction center protein Z (62 aa).

The next 2 helical transmembrane spans lie at 8 to 28 (SVFA…VVLA) and 41 to 61 (FSGA…NSLI).

The protein belongs to the PsbZ family. As to quaternary structure, PSII is composed of 1 copy each of membrane proteins PsbA, PsbB, PsbC, PsbD, PsbE, PsbF, PsbH, PsbI, PsbJ, PsbK, PsbL, PsbM, PsbT, PsbY, PsbZ, Psb30/Ycf12, at least 3 peripheral proteins of the oxygen-evolving complex and a large number of cofactors. It forms dimeric complexes.

The protein localises to the plastid. It is found in the chloroplast thylakoid membrane. Functionally, may control the interaction of photosystem II (PSII) cores with the light-harvesting antenna, regulates electron flow through the 2 photosystem reaction centers. PSII is a light-driven water plastoquinone oxidoreductase, using light energy to abstract electrons from H(2)O, generating a proton gradient subsequently used for ATP formation. The protein is Photosystem II reaction center protein Z of Psilotum nudum (Whisk fern).